The chain runs to 358 residues: DNA polymerase IV (358 aa).

The UmuC domain occupies 4–185 (IIHVDMDCFY…LPLIKIPGVG (182 aa)). Mg(2+)-binding residues include Asp-8 and Asp-103. Glu-104 is an active-site residue.

The protein belongs to the DNA polymerase type-Y family. Monomer. Mg(2+) serves as cofactor.

It is found in the cytoplasm. It catalyses the reaction DNA(n) + a 2'-deoxyribonucleoside 5'-triphosphate = DNA(n+1) + diphosphate. In terms of biological role, poorly processive, error-prone DNA polymerase involved in untargeted mutagenesis. Copies undamaged DNA at stalled replication forks, which arise in vivo from mismatched or misaligned primer ends. These misaligned primers can be extended by PolIV. Exhibits no 3'-5' exonuclease (proofreading) activity. May be involved in translesional synthesis, in conjunction with the beta clamp from PolIII. The polypeptide is DNA polymerase IV (Shewanella pealeana (strain ATCC 700345 / ANG-SQ1)).